The following is a 212-amino-acid chain: Cyclin-dependent kinase inhibitor 3 (212 aa).

Residues M1–F12 are compositionally biased toward polar residues. Residues M1 to E23 are disordered. The interval M1–L34 is interaction with CDK2. The span at D13 to E23 shows a compositional bias: acidic residues. The 170-residue stretch at L32–S201 folds into the Tyrosine-protein phosphatase domain. The Phosphocysteine intermediate role is filled by C140.

It belongs to the protein-tyrosine phosphatase family. Interacts with cyclin-dependent kinases such as CDK1, CDK2 and CDK3. Does not interact with CDK4. Interacts (via C-terminus) with phosphorylated CDK2 (via C-terminal helix). Interacts with MS4A3 (via C-terminus); the interaction enhances CDKN3 enzymatic activity.

It localises to the cytoplasm. Its subcellular location is the perinuclear region. The catalysed reaction is O-phospho-L-tyrosyl-[protein] + H2O = L-tyrosyl-[protein] + phosphate. It catalyses the reaction O-phospho-L-seryl-[protein] + H2O = L-seryl-[protein] + phosphate. It carries out the reaction O-phospho-L-threonyl-[protein] + H2O = L-threonyl-[protein] + phosphate. Its function is as follows. May play a role in cell cycle regulation. Dual specificity phosphatase active toward substrates containing either phosphotyrosine or phosphoserine residues. Dephosphorylates CDK2 at 'Thr-160' in a cyclin-dependent manner. The polypeptide is Cyclin-dependent kinase inhibitor 3 (Sus scrofa (Pig)).